The chain runs to 504 residues: Maturase K (504 aa).

It belongs to the intron maturase 2 family. MatK subfamily.

It localises to the plastid. The protein localises to the chloroplast. Usually encoded in the trnK tRNA gene intron. Probably assists in splicing its own and other chloroplast group II introns. This chain is Maturase K, found in Lobularia maritima (Sweet alyssum).